A 163-amino-acid polypeptide reads, in one-letter code: 3-isopropylmalate dehydratase small subunit (163 aa).

This sequence belongs to the LeuD family. LeuD type 2 subfamily. Heterodimer of LeuC and LeuD.

The catalysed reaction is (2R,3S)-3-isopropylmalate = (2S)-2-isopropylmalate. The protein operates within amino-acid biosynthesis; L-leucine biosynthesis; L-leucine from 3-methyl-2-oxobutanoate: step 2/4. In terms of biological role, catalyzes the isomerization between 2-isopropylmalate and 3-isopropylmalate, via the formation of 2-isopropylmaleate. This is 3-isopropylmalate dehydratase small subunit from Endomicrobium trichonymphae.